Reading from the N-terminus, the 382-residue chain is Inactive ubiquitin-specific protease 5 (382 aa).

Residues 16–141 (VPAEEERALI…GGPTLPRKAI (126 aa)) enclose the DUSP domain. One can recognise a USP domain in the interval 323–382 (TGLLNLGNTCFMNSAIQCLVHTPEFARYFREDYHREINWQNPLGMVVSTLSTSMALKPYV).

The protein belongs to the peptidase C19 family. In terms of tissue distribution, widely expressed with the highest expression in floral organs.

It localises to the cell membrane. Plays an important role in the development of floral organs and chloroplasts. Does not possess deubiquitinating enzyme activity in vitro. The protein is Inactive ubiquitin-specific protease 5 of Oryza sativa subsp. japonica (Rice).